A 100-amino-acid chain; its full sequence is Urease subunit gamma (100 aa).

This sequence belongs to the urease gamma subunit family. As to quaternary structure, heterotrimer of UreA (gamma), UreB (beta) and UreC (alpha) subunits. Three heterotrimers associate to form the active enzyme.

It localises to the cytoplasm. The catalysed reaction is urea + 2 H2O + H(+) = hydrogencarbonate + 2 NH4(+). It participates in nitrogen metabolism; urea degradation; CO(2) and NH(3) from urea (urease route): step 1/1. The protein is Urease subunit gamma of Paracidovorax citrulli (strain AAC00-1) (Acidovorax citrulli).